Consider the following 537-residue polypeptide: Eukaryotic translation initiation factor 3 subunit L (537 aa).

Basic and acidic residues predominate over residues 1 to 19; it reads MSRRVEFDLSTEDHSDRRR. Positions 1 to 30 are disordered; that stretch reads MSRRVEFDLSTEDHSDRRRTNTFSSSADED. The 189-residue stretch at 299–487 folds into the PCI domain; that stretch reads EATKMFVNCL…GPSSADDDEP (189 aa).

The protein belongs to the eIF-3 subunit L family. Component of the eukaryotic translation initiation factor 3 (eIF-3) complex.

Its subcellular location is the cytoplasm. Functionally, component of the eukaryotic translation initiation factor 3 (eIF-3) complex, which is involved in protein synthesis of a specialized repertoire of mRNAs and, together with other initiation factors, stimulates binding of mRNA and methionyl-tRNAi to the 40S ribosome. The eIF-3 complex specifically targets and initiates translation of a subset of mRNAs involved in cell proliferation. In Caenorhabditis elegans, this protein is Eukaryotic translation initiation factor 3 subunit L.